Here is a 411-residue protein sequence, read N- to C-terminus: Nuclear receptor subfamily 2 group F member 1-A (411 aa).

The interval 1–68 (MAMVVSVWRD…AGDKGSQNSG (68 aa)) is disordered. A compositionally biased stretch (low complexity) spans 24–46 (NPAAQPAREQQQAASAAPHTPQT). Residues 73–148 (HIECVVCGDK…VGMRREAVQR (76 aa)) constitute a DNA-binding region (nuclear receptor). NR C4-type zinc fingers lie at residues 76-96 (CVVCGDKSSGKHYGQFTCEGC) and 112-136 (CRANRNCPIDQHHRNQCQYCRLKKC). An NR LBD domain is found at 174–400 (YLSGYISLLL…TLIRDMLLSG (227 aa)).

This sequence belongs to the nuclear hormone receptor family. NR2 subfamily. In terms of tissue distribution, first expressed in 11-12 hour embryos. In the rostral brain of 13 hour embryos, expressed within the anterior half of the midbrain and the posterior part of the diencephalon. In the presumptive hindbrain, expressed in a segment-like stripe in the anterior region, resembling the presumptive rhombomere units of the hindbrain. Also detected in the intermediate mesoderm, posterior to the first somite. As somitogenesis proceeds, expression extends posteriorly and flanks the 10 most anterior somites. Expression changes extensively both in level and expansion of domains between 13 and 20 hours. In the rostral brain, expression extends to include a major part of the diencephalon and a caudal portion of the telencephalon. Within the hindbrain, strongly expressed in the two most anterior rhombomeres, and a lower but uniform expression is seen to extend throughout rhombomere 7. In 28 hour embryos, higher and more uniform expression is seen in both rostral and hindbrain areas. Also expressed in the retina of the eye.

Its subcellular location is the nucleus. Its function is as follows. Putative transcription factor that is required in photoreceptor cells precursors during eye development. The protein is Nuclear receptor subfamily 2 group F member 1-A (nr2f1a) of Danio rerio (Zebrafish).